Reading from the N-terminus, the 373-residue chain is tRNA-specific 2-thiouridylase MnmA (373 aa).

Residues 12–19 (GMSGGVDS) and M38 each bind ATP. The interaction with target base in tRNA stretch occupies residues 98–100 (NPD). The active-site Nucleophile is C103. The cysteines at positions 103 and 200 are disulfide-linked. G127 is an ATP binding site. The segment at 150–152 (KDQ) is interaction with tRNA. C200 functions as the Cysteine persulfide intermediate in the catalytic mechanism. Positions 312–313 (RY) are interaction with tRNA.

The protein belongs to the MnmA/TRMU family.

The protein localises to the cytoplasm. It catalyses the reaction S-sulfanyl-L-cysteinyl-[protein] + uridine(34) in tRNA + AH2 + ATP = 2-thiouridine(34) in tRNA + L-cysteinyl-[protein] + A + AMP + diphosphate + H(+). In terms of biological role, catalyzes the 2-thiolation of uridine at the wobble position (U34) of tRNA, leading to the formation of s(2)U34. In Streptococcus agalactiae serotype III (strain NEM316), this protein is tRNA-specific 2-thiouridylase MnmA.